We begin with the raw amino-acid sequence, 226 residues long: 7-cyano-7-deazaguanine synthase (226 aa).

9 to 19 (LSGGLDSATVL) provides a ligand contact to ATP. 4 residues coordinate Zn(2+): Cys-189, Cys-199, Cys-202, and Cys-205.

It belongs to the QueC family. It depends on Zn(2+) as a cofactor.

The catalysed reaction is 7-carboxy-7-deazaguanine + NH4(+) + ATP = 7-cyano-7-deazaguanine + ADP + phosphate + H2O + H(+). The protein operates within purine metabolism; 7-cyano-7-deazaguanine biosynthesis. Catalyzes the ATP-dependent conversion of 7-carboxy-7-deazaguanine (CDG) to 7-cyano-7-deazaguanine (preQ(0)). This Cupriavidus pinatubonensis (strain JMP 134 / LMG 1197) (Cupriavidus necator (strain JMP 134)) protein is 7-cyano-7-deazaguanine synthase.